A 196-amino-acid polypeptide reads, in one-letter code: GTP cyclohydrolase 1 (196 aa).

Residues C86, H89, and C158 each coordinate Zn(2+).

It belongs to the GTP cyclohydrolase I family. As to quaternary structure, toroid-shaped homodecamer, composed of two pentamers of five dimers.

It catalyses the reaction GTP + H2O = 7,8-dihydroneopterin 3'-triphosphate + formate + H(+). It participates in cofactor biosynthesis; 7,8-dihydroneopterin triphosphate biosynthesis; 7,8-dihydroneopterin triphosphate from GTP: step 1/1. This is GTP cyclohydrolase 1 from Clostridium botulinum (strain ATCC 19397 / Type A).